The following is a 132-amino-acid chain: Large ribosomal subunit protein bL17 (132 aa).

This sequence belongs to the bacterial ribosomal protein bL17 family. Part of the 50S ribosomal subunit. Contacts protein L32.

This Marinobacter nauticus (strain ATCC 700491 / DSM 11845 / VT8) (Marinobacter aquaeolei) protein is Large ribosomal subunit protein bL17.